We begin with the raw amino-acid sequence, 141 residues long: Succinate dehydrogenase assembly factor 2, mitochondrial (141 aa).

Belongs to the SDHAF2 family. Interacts with the flavoprotein subunit within the SDH catalytic dimer.

The protein resides in the mitochondrion matrix. Functionally, plays an essential role in the assembly of succinate dehydrogenase (SDH), an enzyme complex (also referred to as respiratory complex II) that is a component of both the tricarboxylic acid (TCA) cycle and the mitochondrial electron transport chain, and which couples the oxidation of succinate to fumarate with the reduction of ubiquinone (coenzyme Q) to ubiquinol. Required for flavinylation (covalent attachment of FAD) of the flavoprotein subunit of the SDH catalytic dimer. The protein is Succinate dehydrogenase assembly factor 2, mitochondrial of Dictyostelium discoideum (Social amoeba).